We begin with the raw amino-acid sequence, 364 residues long: Pyrimidine monooxygenase RutA (364 aa).

FMN contacts are provided by residues 49–50 (IK), Asn-115, Glu-124, 140–141 (RY), and Ser-190.

This sequence belongs to the NtaA/SnaA/DszA monooxygenase family. RutA subfamily.

The enzyme catalyses uracil + FMNH2 + NADH + O2 = (Z)-3-ureidoacrylate + FMN + NAD(+) + H2O + H(+). The catalysed reaction is thymine + FMNH2 + NADH + O2 = (Z)-2-methylureidoacrylate + FMN + NAD(+) + H2O + H(+). Its function is as follows. Catalyzes the pyrimidine ring opening between N-3 and C-4 by an unusual flavin hydroperoxide-catalyzed mechanism, adding oxygen atoms in the process to yield ureidoacrylate peracid, that immediately reacts with FMN forming ureidoacrylate and FMN-N(5)-oxide. The FMN-N(5)-oxide reacts spontaneously with NADH to produce FMN. Requires the flavin reductase RutF to regenerate FMN in vivo. This is Pyrimidine monooxygenase RutA from Methylorubrum extorquens (strain ATCC 14718 / DSM 1338 / JCM 2805 / NCIMB 9133 / AM1) (Methylobacterium extorquens).